The sequence spans 522 residues: F-box-like/WD repeat-containing protein TBL1XR1-B (522 aa).

Residues 4–36 (SSDEVNFLVYRYLQESGFSHSAFTFGIESHISQ) enclose the LisH domain. An F-box-like domain is found at 41–86 (GALVPPAALISIIQKGLQYVEAEVSINEDGTLFDGRPIESLSLIDA). The segment at 122-150 (ATSANNQQPPAKNGESTANGEENGGHALA) is disordered. Polar residues predominate over residues 123-141 (TSANNQQPPAKNGESTANG). WD repeat units lie at residues 175-214 (GHESEVFICAWNPVSDLLASGSGDSTARIWNLSENSTSGS), 231-270 (PSNKDVTSLDWNSEGTLLATGSYDGFARIWTKDGNLASTL), 272-311 (QHKGPIFALKWNKKGNFILSAGVDKTTIIWDAHTGEAKQQ), 314-352 (FHSAPALDVDWQSNNTFASCSTDMCIHVCKLGQDRPIKT), 355-394 (GHTNEVNAIKWDPTGNLLASCSDDMTLKIWSMKHDTCVHD), 397-445 (AHNK…CIHT), 448-487 (KHQEPVYSVAFSPDGRYLASGSFDKCVHIWNTQTGALVHS), and 489-522 (RGTGGIFEVCWNAAGDKVGASASDGSVCVLDLRK).

This sequence belongs to the WD repeat EBI family. In terms of assembly, interacts with heterodimers of rxra and thrb, and this interaction is abrogated by thyroid hormone binding to thrb. Interacts with ncor1.

It is found in the nucleus. In terms of biological role, F-box-like protein which acts as an integral component of the N-CoR transcriptional corepressor complex. Probably regulates transcription activation mediated by nuclear receptors. May mediate the recruitment of the 19S proteasome complex, leading to the subsequent proteasomal degradation of the N-CoR complex, thereby allowing cofactor exchange and transcription activation. The chain is F-box-like/WD repeat-containing protein TBL1XR1-B (tbl1xr1-b) from Xenopus laevis (African clawed frog).